Reading from the N-terminus, the 309-residue chain is 4-hydroxy-3-methylbut-2-enyl diphosphate reductase (309 aa).

Residue Cys13 coordinates [4Fe-4S] cluster. Residues His42 and His75 each contribute to the (2E)-4-hydroxy-3-methylbut-2-enyl diphosphate site. Dimethylallyl diphosphate-binding residues include His42 and His75. Isopentenyl diphosphate is bound by residues His42 and His75. Position 97 (Cys97) interacts with [4Fe-4S] cluster. His125 provides a ligand contact to (2E)-4-hydroxy-3-methylbut-2-enyl diphosphate. His125 serves as a coordination point for dimethylallyl diphosphate. An isopentenyl diphosphate-binding site is contributed by His125. Glu127 (proton donor) is an active-site residue. Thr165 provides a ligand contact to (2E)-4-hydroxy-3-methylbut-2-enyl diphosphate. Residue Cys195 participates in [4Fe-4S] cluster binding. (2E)-4-hydroxy-3-methylbut-2-enyl diphosphate contacts are provided by Ser223, Ser224, Asn225, and Ser267. Positions 223, 224, 225, and 267 each coordinate dimethylallyl diphosphate. 4 residues coordinate isopentenyl diphosphate: Ser223, Ser224, Asn225, and Ser267.

This sequence belongs to the IspH family. The cofactor is [4Fe-4S] cluster.

The catalysed reaction is isopentenyl diphosphate + 2 oxidized [2Fe-2S]-[ferredoxin] + H2O = (2E)-4-hydroxy-3-methylbut-2-enyl diphosphate + 2 reduced [2Fe-2S]-[ferredoxin] + 2 H(+). It carries out the reaction dimethylallyl diphosphate + 2 oxidized [2Fe-2S]-[ferredoxin] + H2O = (2E)-4-hydroxy-3-methylbut-2-enyl diphosphate + 2 reduced [2Fe-2S]-[ferredoxin] + 2 H(+). It participates in isoprenoid biosynthesis; dimethylallyl diphosphate biosynthesis; dimethylallyl diphosphate from (2E)-4-hydroxy-3-methylbutenyl diphosphate: step 1/1. The protein operates within isoprenoid biosynthesis; isopentenyl diphosphate biosynthesis via DXP pathway; isopentenyl diphosphate from 1-deoxy-D-xylulose 5-phosphate: step 6/6. Functionally, catalyzes the conversion of 1-hydroxy-2-methyl-2-(E)-butenyl 4-diphosphate (HMBPP) into a mixture of isopentenyl diphosphate (IPP) and dimethylallyl diphosphate (DMAPP). Acts in the terminal step of the DOXP/MEP pathway for isoprenoid precursor biosynthesis. In Chlamydia felis (strain Fe/C-56) (Chlamydophila felis), this protein is 4-hydroxy-3-methylbut-2-enyl diphosphate reductase.